The following is a 366-amino-acid chain: Ribosomal RNA large subunit methyltransferase M (366 aa).

S-adenosyl-L-methionine is bound by residues Ser-188, 221 to 224, Asp-240, Asp-260, and Asp-277; that span reads CPGG. Lys-306 acts as the Proton acceptor in catalysis.

The protein belongs to the class I-like SAM-binding methyltransferase superfamily. RNA methyltransferase RlmE family. RlmM subfamily. Monomer.

The protein resides in the cytoplasm. The catalysed reaction is cytidine(2498) in 23S rRNA + S-adenosyl-L-methionine = 2'-O-methylcytidine(2498) in 23S rRNA + S-adenosyl-L-homocysteine + H(+). Functionally, catalyzes the 2'-O-methylation at nucleotide C2498 in 23S rRNA. The sequence is that of Ribosomal RNA large subunit methyltransferase M from Klebsiella pneumoniae subsp. pneumoniae (strain ATCC 700721 / MGH 78578).